An 85-amino-acid chain; its full sequence is uncharacterized protein (85 aa).

2 consecutive transmembrane segments (helical) span residues 12–34 and 49–71; these read ICLS…VLAF and IPEF…NGFV.

The protein resides in the cell membrane. This is an uncharacterized protein from Archaeoglobus fulgidus (strain ATCC 49558 / DSM 4304 / JCM 9628 / NBRC 100126 / VC-16).